Consider the following 214-residue polypeptide: Phosphatidylserine decarboxylase proenzyme (214 aa).

The active-site Schiff-base intermediate with substrate; via pyruvic acid is the Ser182. Pyruvic acid (Ser); by autocatalysis is present on Ser182.

It belongs to the phosphatidylserine decarboxylase family. PSD-A subfamily. In terms of assembly, heterodimer of a large membrane-associated beta subunit and a small pyruvoyl-containing alpha subunit. It depends on pyruvate as a cofactor. Post-translationally, is synthesized initially as an inactive proenzyme. Formation of the active enzyme involves a self-maturation process in which the active site pyruvoyl group is generated from an internal serine residue via an autocatalytic post-translational modification. Two non-identical subunits are generated from the proenzyme in this reaction, and the pyruvate is formed at the N-terminus of the alpha chain, which is derived from the carboxyl end of the proenzyme. The post-translation cleavage follows an unusual pathway, termed non-hydrolytic serinolysis, in which the side chain hydroxyl group of the serine supplies its oxygen atom to form the C-terminus of the beta chain, while the remainder of the serine residue undergoes an oxidative deamination to produce ammonia and the pyruvoyl prosthetic group on the alpha chain.

The protein localises to the cell membrane. The catalysed reaction is a 1,2-diacyl-sn-glycero-3-phospho-L-serine + H(+) = a 1,2-diacyl-sn-glycero-3-phosphoethanolamine + CO2. Its pathway is phospholipid metabolism; phosphatidylethanolamine biosynthesis; phosphatidylethanolamine from CDP-diacylglycerol: step 2/2. Catalyzes the formation of phosphatidylethanolamine (PtdEtn) from phosphatidylserine (PtdSer). This is Phosphatidylserine decarboxylase proenzyme from Solidesulfovibrio magneticus (strain ATCC 700980 / DSM 13731 / RS-1) (Desulfovibrio magneticus).